Consider the following 143-residue polypeptide: Large ribosomal subunit protein uL11 (143 aa).

This sequence belongs to the universal ribosomal protein uL11 family. In terms of assembly, part of the ribosomal stalk of the 50S ribosomal subunit. Interacts with L10 and the large rRNA to form the base of the stalk. L10 forms an elongated spine to which L12 dimers bind in a sequential fashion forming a multimeric L10(L12)X complex. One or more lysine residues are methylated.

Functionally, forms part of the ribosomal stalk which helps the ribosome interact with GTP-bound translation factors. In Rhizobium etli (strain ATCC 51251 / DSM 11541 / JCM 21823 / NBRC 15573 / CFN 42), this protein is Large ribosomal subunit protein uL11.